Reading from the N-terminus, the 152-residue chain is Transcriptional regulator MraZ (152 aa).

2 consecutive SpoVT-AbrB domains span residues 5–52 and 81–124; these read ASAI…PIHE and AHEC…DEAA.

The protein belongs to the MraZ family. Forms oligomers.

It is found in the cytoplasm. The protein resides in the nucleoid. The protein is Transcriptional regulator MraZ of Shewanella pealeana (strain ATCC 700345 / ANG-SQ1).